A 118-amino-acid chain; its full sequence is V-type proton ATPase subunit G 1 (118 aa).

Ala-2 carries the N-acetylalanine modification.

It belongs to the V-ATPase G subunit family. V-ATPase is a heteromultimeric enzyme made up of two complexes: the ATP-hydrolytic V1 complex and the proton translocation V0 complex. The V1 complex consists of three catalytic AB heterodimers that form a heterohexamer, three peripheral stalks each consisting of EG heterodimers, one central rotor including subunits D and F, and the regulatory subunits C and H. The proton translocation complex V0 consists of the proton transport subunit a, a ring of proteolipid subunits c9c'', rotary subunit d, subunits e and f, and the accessory subunits ATP6AP1/Ac45 and ATP6AP2/PRR. In terms of tissue distribution, kidney; localizes to early distal nephron, encompassing thick ascending limbs and distal convoluted tubules (at protein level). Ubiquitous.

Its subcellular location is the apical cell membrane. Subunit of the V1 complex of vacuolar(H+)-ATPase (V-ATPase), a multisubunit enzyme composed of a peripheral complex (V1) that hydrolyzes ATP and a membrane integral complex (V0) that translocates protons. V-ATPase is responsible for acidifying and maintaining the pH of intracellular compartments and in some cell types, is targeted to the plasma membrane, where it is responsible for acidifying the extracellular environment. In aerobic conditions, involved in intracellular iron homeostasis, thus triggering the activity of Fe(2+) prolyl hydroxylase (PHD) enzymes, and leading to HIF1A hydroxylation and subsequent proteasomal degradation. This is V-type proton ATPase subunit G 1 (Atp6v1g1) from Mus musculus (Mouse).